Here is a 409-residue protein sequence, read N- to C-terminus: Chaetoglobosin A biosynthesis cluster protein C (409 aa).

One can recognise an HTH CENPB-type domain in the interval 51–120 (DLPANSRKLT…VKRQPQLRTR (70 aa)). Positions 84–113 (RGVEDMANHLLRERDAPPVGKLWAHNFVKR) form a DNA-binding region, H-T-H motif. Disordered stretches follow at residues 243–269 (PTHP…ETRS) and 320–350 (ANEP…QDPL). The span at 255–269 (PWASKTPYNAQETRS) shows a compositional bias: polar residues.

It is found in the nucleus. Functionally, part of the gene cluster that mediates the biosynthesis of chaetoglobosin A which has a unique inhibitory activity against actin polymerization in mammalian cells. Chaetoglobosin A and its intermediates are involved in the morphological differentiation of C.globosum. The first step of the pathway is the synthesis of prochaetoglobosin I via condensation of one acetyl-CoA, 8 malonyl-CoA, and a L-tryptophan molecule by the PKS-NRPS hybrid synthetase cheA, followed by reduction of backbone double bond to install desired geometry by the enoyl reductase cheB. Further multiple oxidation steps performed by the cytochrome P450 monooxygenases cheE and cheG, as well as by the FAD-linked oxidoreductase cheF, lead to the formation of chaetoglobosin A. Depending on the order of action of these reductases, distinct intermediates can be identified. Within the pathway, the cytochrome P450 monooxygenase cheE catalyzes a stereospecific epoxidation on prochaetoglobosin I, cytoglobosin D, and chaetoglobosin J intermediates. The FAD-linked oxidoreductase cheF performs dehydrogenation of the C-20 hydroxyl groups in the 20-dihyrochaetoglobosin A and cytoglobosin D intermediates. Finally, the cytochrome P450 monooxygenase cheG can catalyze the stereospecific dihydroxylation of prochaetoglobosin I and prochaetoglobosin IV at C-19 and C-20, respectively. The Diels-Alderase cheD may play a role in the post-PKS-NRPS biosynthetic steps catalyzing Diels-Alder cyclization. The chain is Chaetoglobosin A biosynthesis cluster protein C from Chaetomium globosum (strain ATCC 6205 / CBS 148.51 / DSM 1962 / NBRC 6347 / NRRL 1970) (Soil fungus).